A 322-amino-acid polypeptide reads, in one-letter code: Protein-L-isoaspartate O-methyltransferase (322 aa).

The disordered stretch occupies residues 1 to 101; that stretch reads MSGERAKRFP…AKQGDRSAAP (101 aa). Residues 14-29 show a composition bias toward basic and acidic residues; the sequence is EDLKREPRKPEGRVAE. Composition is skewed to low complexity over residues 33–51 and 76–91; these read AGDAARQRLTAAAAVPAAA and HAPAAPGAAKRAPQGG. Serine 170 is a catalytic residue.

This sequence belongs to the methyltransferase superfamily. L-isoaspartyl/D-aspartyl protein methyltransferase family.

The protein resides in the cytoplasm. It carries out the reaction [protein]-L-isoaspartate + S-adenosyl-L-methionine = [protein]-L-isoaspartate alpha-methyl ester + S-adenosyl-L-homocysteine. Its function is as follows. Catalyzes the methyl esterification of L-isoaspartyl residues in peptides and proteins that result from spontaneous decomposition of normal L-aspartyl and L-asparaginyl residues. It plays a role in the repair and/or degradation of damaged proteins. In Burkholderia pseudomallei (strain 1106a), this protein is Protein-L-isoaspartate O-methyltransferase.